Consider the following 131-residue polypeptide: MVKKFEYRGKPAEELESMPLDSLFRLFNSRQRRSLTRGITDGKRKLIREIKDARAGKEGNPIKTHLRDLIVLPSMTGVTVNVFSGKEFRPVEITTEMIGHYLGEYVITNKRVSHGAPGVGASRSSLYVPLK.

This sequence belongs to the universal ribosomal protein uS19 family.

Protein S19 forms a complex with S13 that binds strongly to the 16S ribosomal RNA. In Cenarchaeum symbiosum (strain A), this protein is Small ribosomal subunit protein uS19.